We begin with the raw amino-acid sequence, 497 residues long: Di-/tripeptide transporter (497 aa).

Helical transmembrane passes span 3 to 23 (AILL…MSQT), 26 to 46 (ASIM…GGWL), 57 to 77 (VFYG…PAGV), 84 to 104 (IALI…MVGG), 119 to 139 (IFVF…PWAA), 155 to 175 (AGFS…VLGG), 199 to 219 (IKWV…MAGV), 227 to 247 (VITL…VMMF), 294 to 314 (FIIL…KVII), 321 to 341 (LVLL…TFVL), 372 to 392 (GIEI…LIIL), and 452 to 472 (IVII…WSYI).

Belongs to the major facilitator superfamily. Proton-dependent oligopeptide transporter (POT/PTR) (TC 2.A.17) family.

The protein resides in the cell membrane. Proton-dependent uptake of di- or tri-peptides. The protein is Di-/tripeptide transporter (dtpT) of Lactobacillus helveticus (Lactobacillus suntoryeus).